The sequence spans 182 residues: Transcription termination/antitermination protein NusG (182 aa).

It belongs to the NusG family.

Participates in transcription elongation, termination and antitermination. The sequence is that of Transcription termination/antitermination protein NusG from Chlamydia pneumoniae (Chlamydophila pneumoniae).